A 353-amino-acid polypeptide reads, in one-letter code: Photosystem II protein D1 (353 aa).

N-acetylthreonine is present on Thr2. The residue at position 2 (Thr2) is a Phosphothreonine. 3 helical membrane passes run Tyr29–Ser46, His118–Leu133, and Trp142–Ala156. His118 is a binding site for chlorophyll a. Tyr126 lines the pheophytin a pocket. [CaMn4O5] cluster-binding residues include Asp170 and Glu189. Residues Phe197–Leu218 form a helical membrane-spanning segment. His198 is a chlorophyll a binding site. A quinone is bound by residues His215 and Ser264 to Phe265. His215 contributes to the Fe cation binding site. His272 lines the Fe cation pocket. A helical transmembrane segment spans residues Phe274 to Leu288. His332, Glu333, Asp342, and Ala344 together coordinate [CaMn4O5] cluster. The propeptide occupies Ala345–Gly353.

It belongs to the reaction center PufL/M/PsbA/D family. In terms of assembly, PSII is composed of 1 copy each of membrane proteins PsbA, PsbB, PsbC, PsbD, PsbE, PsbF, PsbH, PsbI, PsbJ, PsbK, PsbL, PsbM, PsbT, PsbX, PsbY, PsbZ, Psb30/Ycf12, at least 3 peripheral proteins of the oxygen-evolving complex and a large number of cofactors. It forms dimeric complexes. It depends on The D1/D2 heterodimer binds P680, chlorophylls that are the primary electron donor of PSII, and subsequent electron acceptors. It shares a non-heme iron and each subunit binds pheophytin, quinone, additional chlorophylls, carotenoids and lipids. D1 provides most of the ligands for the Mn4-Ca-O5 cluster of the oxygen-evolving complex (OEC). There is also a Cl(-1) ion associated with D1 and D2, which is required for oxygen evolution. The PSII complex binds additional chlorophylls, carotenoids and specific lipids. as a cofactor. In terms of processing, tyr-161 forms a radical intermediate that is referred to as redox-active TyrZ, YZ or Y-Z. C-terminally processed by CTPA; processing is essential to allow assembly of the oxygen-evolving complex and thus photosynthetic growth.

It localises to the plastid. The protein localises to the chloroplast thylakoid membrane. The enzyme catalyses 2 a plastoquinone + 4 hnu + 2 H2O = 2 a plastoquinol + O2. Photosystem II (PSII) is a light-driven water:plastoquinone oxidoreductase that uses light energy to abstract electrons from H(2)O, generating O(2) and a proton gradient subsequently used for ATP formation. It consists of a core antenna complex that captures photons, and an electron transfer chain that converts photonic excitation into a charge separation. The D1/D2 (PsbA/PsbD) reaction center heterodimer binds P680, the primary electron donor of PSII as well as several subsequent electron acceptors. The chain is Photosystem II protein D1 from Oryza nivara (Indian wild rice).